A 446-amino-acid chain; its full sequence is Putative hydrolase YbfO (446 aa).

An N-terminal signal peptide occupies residues M1 to A28.

This Bacillus subtilis (strain 168) protein is Putative hydrolase YbfO (ybfO).